Reading from the N-terminus, the 426-residue chain is tRNA modification GTPase MnmE (426 aa).

Residues Arg-20, Glu-77, and Met-117 each contribute to the (6S)-5-formyl-5,6,7,8-tetrahydrofolate site. Residues 213 to 350 (GFEVAILGAP…LLTDIEGVLS (138 aa)) form the TrmE-type G domain. Asn-223 is a K(+) binding site. GTP contacts are provided by residues 223–228 (NAGKST), 242–248 (SDVPGTT), and 267–270 (DTAG). Ser-227 contributes to the Mg(2+) binding site. Residues Ser-242, Val-244, and Thr-247 each coordinate K(+). A Mg(2+)-binding site is contributed by Thr-248. Lys-426 is a binding site for (6S)-5-formyl-5,6,7,8-tetrahydrofolate.

It belongs to the TRAFAC class TrmE-Era-EngA-EngB-Septin-like GTPase superfamily. TrmE GTPase family. Homodimer. Heterotetramer of two MnmE and two MnmG subunits. K(+) is required as a cofactor.

The protein localises to the cytoplasm. Functionally, exhibits a very high intrinsic GTPase hydrolysis rate. Involved in the addition of a carboxymethylaminomethyl (cmnm) group at the wobble position (U34) of certain tRNAs, forming tRNA-cmnm(5)s(2)U34. The sequence is that of tRNA modification GTPase MnmE from Jannaschia sp. (strain CCS1).